The following is a 127-amino-acid chain: DCPPDWSSYEGSCYRVFEQKMNWEDAEKFCTQQQTGGHLVSFQSSEEADFVVSLTSPILRDSFVWTGLSDVWKGCRFEWSDGSDLSYKDNYQFVFSEYECVASKTKNNKWRIIPCTKLEYFVCEFQA.

3 disulfides stabilise this stretch: C2-C13, C30-C123, and C100-C115. Residues 9–124 (YEGSCYRVFE…CTKLEYFVCE (116 aa)) enclose the C-type lectin domain.

Belongs to the snaclec family. In terms of assembly, heterodimer of subunits alpha and beta; disulfide-linked. Expressed by the venom gland.

Its subcellular location is the secreted. Functionally, thrombin and prothrombin (F2) inhibitor. The IC(50) of thrombin-induced platelet aggregation and fibrinocoagulation is 62 and 35 nM, respectively. Its inhibitory activity is at least 10-fold lower than that observed for other thrombin inhibitors. The chain is Snaclec bothroinsularin subunit beta from Bothrops insularis (Golden lancehead).